Reading from the N-terminus, the 143-residue chain is Putative pre-16S rRNA nuclease (143 aa).

Belongs to the YqgF nuclease family.

The protein resides in the cytoplasm. Its function is as follows. Could be a nuclease involved in processing of the 5'-end of pre-16S rRNA. This chain is Putative pre-16S rRNA nuclease, found in Agathobacter rectalis (strain ATCC 33656 / DSM 3377 / JCM 17463 / KCTC 5835 / VPI 0990) (Eubacterium rectale).